The chain runs to 606 residues: Leucine-rich repeat and immunoglobulin-like domain-containing nogo receptor-interacting protein 1 (606 aa).

Residues 1-27 (MILQLPSCLCPILLIVVGSILSGSASG) form the signal peptide. Disulfide bonds link cysteine 28–cysteine 34 and cysteine 32–cysteine 43. The 30-residue stretch at 28–57 (CPQRCDCSPQDRSVLCHRKRYLDVPEGIPT) folds into the LRRNT domain. Over 28 to 547 (CPQRCDCSPQ…FDIKTLIIAT (520 aa)) the chain is Extracellular. LRR repeat units follow at residues 58-79 (DTRLLDLSKNRIKALNQDEFSA), 82-103 (YLEELELNENIVSIIEPGAFNG), 106-127 (NLRSLGLRSNRLKLIPLGVFTG), 130-151 (NLTQLDISENKIVILLDDMFQD), 154-175 (NLKSLEVGDNDLVYISHRAFRG), 178-199 (SLEELTLEKCNLTSVPTEALSH), 202-223 (GLITLKLRYLNINVIRDYSFKR), 250-271 (NLTSLSITHSNLSSIPYVAIRH), 274-295 (YLRFLNLSYNPITAVEGSMLYE), 298-319 (RLQEFHLVGGQLSVVEPYAFRG), and 322-343 (HLKVLNVSSNYLSTLEESSFHS). Asparagine 130 is a glycosylation site (N-linked (GlcNAc...) asparagine). An N-linked (GlcNAc...) asparagine glycan is attached at asparagine 188. Asparagine 250, asparagine 260, and asparagine 279 each carry an N-linked (GlcNAc...) asparagine glycan. 7 N-linked (GlcNAc...) asparagine glycosylation sites follow: asparagine 327, asparagine 374, asparagine 478, asparagine 491, asparagine 512, asparagine 523, and asparagine 528. The region spanning 355–409 (NPLACDCRLLWIFRRRWRLNFSRQQPSCSSPEYVQGKEFKDFPDVLQPNYFTCRR) is the LRRCT domain. 3 disulfide bridges follow: cysteine 359–cysteine 382, cysteine 361–cysteine 407, and cysteine 432–cysteine 483. In terms of domain architecture, Ig-like C2-type spans 397 to 496 (PDVLQPNYFT…NAGGNDTSLA (100 aa)). The helical transmembrane segment at 548-568 (TMGFISFLGVVLFCLVLLFLW) threads the bilayer. The Cytoplasmic portion of the chain corresponds to 569-606 (SRGKGNTKHNIEIEYVPRKSDAGLSSADAPRKFNMKMI).

Its subcellular location is the cell membrane. In terms of biological role, may play a role in regulating axonal regeneration and plasticity in the adult central nervous system. This Xenopus tropicalis (Western clawed frog) protein is Leucine-rich repeat and immunoglobulin-like domain-containing nogo receptor-interacting protein 1 (lingo1).